The chain runs to 326 residues: Biotin synthase (326 aa).

Residues 47-274 (NEVQVSSLLS…ASRVRLSAGR (228 aa)) form the Radical SAM core domain. Residues cysteine 62, cysteine 66, and cysteine 69 each coordinate [4Fe-4S] cluster. Residues cysteine 106, cysteine 137, cysteine 197, and arginine 269 each contribute to the [2Fe-2S] cluster site.

This sequence belongs to the radical SAM superfamily. Biotin synthase family. Homodimer. [4Fe-4S] cluster serves as cofactor. [2Fe-2S] cluster is required as a cofactor.

The catalysed reaction is (4R,5S)-dethiobiotin + (sulfur carrier)-SH + 2 reduced [2Fe-2S]-[ferredoxin] + 2 S-adenosyl-L-methionine = (sulfur carrier)-H + biotin + 2 5'-deoxyadenosine + 2 L-methionine + 2 oxidized [2Fe-2S]-[ferredoxin]. It participates in cofactor biosynthesis; biotin biosynthesis; biotin from 7,8-diaminononanoate: step 2/2. In terms of biological role, catalyzes the conversion of dethiobiotin (DTB) to biotin by the insertion of a sulfur atom into dethiobiotin via a radical-based mechanism. This chain is Biotin synthase, found in Methylococcus capsulatus (strain ATCC 33009 / NCIMB 11132 / Bath).